Here is a 301-residue protein sequence, read N- to C-terminus: uncharacterized protein (301 aa).

The protein belongs to the asfivirus E301R family. As to quaternary structure, interacts with host IRF3.

Functionally, plays a role in the inhibition of host innate immune system by acting as a negatively regulator of type I interferon production. Mechanistically, interacts with and prevents host IRF3 nuclear localization to inhibit its transcriptional activity. This is an uncharacterized protein from African swine fever virus (isolate Pig/Kenya/KEN-50/1950) (ASFV).